Here is a 943-residue protein sequence, read N- to C-terminus: Isoleucine--tRNA ligase (943 aa).

The 'HIGH' region motif lies at 59-69 (PYANGQIHLGH). Position 577 (Glu-577) interacts with L-isoleucyl-5'-AMP. The 'KMSKS' region signature appears at 618 to 622 (KMSKS). Lys-621 lines the ATP pocket. 4 residues coordinate Zn(2+): Cys-906, Cys-909, Cys-926, and Cys-929.

It belongs to the class-I aminoacyl-tRNA synthetase family. IleS type 1 subfamily. As to quaternary structure, monomer. Requires Zn(2+) as cofactor.

It localises to the cytoplasm. The catalysed reaction is tRNA(Ile) + L-isoleucine + ATP = L-isoleucyl-tRNA(Ile) + AMP + diphosphate. Functionally, catalyzes the attachment of isoleucine to tRNA(Ile). As IleRS can inadvertently accommodate and process structurally similar amino acids such as valine, to avoid such errors it has two additional distinct tRNA(Ile)-dependent editing activities. One activity is designated as 'pretransfer' editing and involves the hydrolysis of activated Val-AMP. The other activity is designated 'posttransfer' editing and involves deacylation of mischarged Val-tRNA(Ile). This chain is Isoleucine--tRNA ligase, found in Xanthomonas oryzae pv. oryzae (strain MAFF 311018).